Here is a 309-residue protein sequence, read N- to C-terminus: L-arabinose 1-dehydrogenase (NAD(P)(+)) (309 aa).

Residues Ile-15 and 37-38 (SR) contribute to the NADP(+) site. Lys-91 acts as the Proton donor in catalysis. Residue Asp-169 participates in NADP(+) binding.

Belongs to the Gfo/Idh/MocA family. Monomer.

The enzyme catalyses alpha-L-arabinopyanose + NAD(+) = L-arabinono-1,4-lactone + NADH + H(+). The catalysed reaction is alpha-L-arabinopyanose + NADP(+) = L-arabinono-1,4-lactone + NADPH + H(+). It catalyses the reaction D-galactose + NAD(+) = D-galactono-1,4-lactone + NADH + H(+). It carries out the reaction D-galactose + NADP(+) = D-galactono-1,5-lactone + NADPH + H(+). The protein operates within carbohydrate degradation; L-arabinose degradation via L-arabinono-1,4-lactone pathway. Functionally, catalyzes the NAD(P)(+)-dependent conversion of L-arabinose to L-arabino-gamma-lactone. Is involved in a degradation pathway of L-arabinose that allows A.brasilense to grow on L-arabinose as a sole carbon source. Prefers NADP(+) to NAD(+) as electron acceptor. Displays high catalytic efficiency for both L-arabinose and D-galactose in vitro. However, the enzyme appears to be involved in the metabolism of L-arabinose but not D-galactose in vivo. To a lesser extent, is also active on D-talose and D-xylose as substrates in vitro, but not with D-arabinose, D-glucose, D-ribose, L-xylose, L-mannose, L-lyxose, and D-fructose. In Azospirillum brasilense, this protein is L-arabinose 1-dehydrogenase (NAD(P)(+)) (araA).